The following is a 234-amino-acid chain: 7-cyano-7-deazaguanine synthase (234 aa).

Residue 13–23 (FSGGIDSTTCL) coordinates ATP. The Zn(2+) site is built by cysteine 197, cysteine 207, cysteine 210, and cysteine 213.

This sequence belongs to the QueC family. Zn(2+) is required as a cofactor.

The catalysed reaction is 7-carboxy-7-deazaguanine + NH4(+) + ATP = 7-cyano-7-deazaguanine + ADP + phosphate + H2O + H(+). It functions in the pathway purine metabolism; 7-cyano-7-deazaguanine biosynthesis. Functionally, catalyzes the ATP-dependent conversion of 7-carboxy-7-deazaguanine (CDG) to 7-cyano-7-deazaguanine (preQ(0)). In Syntrophobacter fumaroxidans (strain DSM 10017 / MPOB), this protein is 7-cyano-7-deazaguanine synthase.